We begin with the raw amino-acid sequence, 376 residues long: Putative clathrin assembly protein At1g25240 (376 aa).

An ENTH domain is found at 25–156 (KTSFRNPDLD…FFLSDQIRRR (132 aa)).

The protein localises to the membrane. The protein resides in the clathrin-coated pit. It is found in the golgi apparatus. Its subcellular location is the cytoplasmic vesicle. It localises to the clathrin-coated vesicle. The polypeptide is Putative clathrin assembly protein At1g25240 (Arabidopsis thaliana (Mouse-ear cress)).